The sequence spans 145 residues: D-aminoacyl-tRNA deacylase (145 aa).

A Gly-cisPro motif, important for rejection of L-amino acids motif is present at residues 137-138; the sequence is GP.

This sequence belongs to the DTD family. In terms of assembly, homodimer.

The protein resides in the cytoplasm. It carries out the reaction glycyl-tRNA(Ala) + H2O = tRNA(Ala) + glycine + H(+). It catalyses the reaction a D-aminoacyl-tRNA + H2O = a tRNA + a D-alpha-amino acid + H(+). Its function is as follows. An aminoacyl-tRNA editing enzyme that deacylates mischarged D-aminoacyl-tRNAs. Also deacylates mischarged glycyl-tRNA(Ala), protecting cells against glycine mischarging by AlaRS. Acts via tRNA-based rather than protein-based catalysis; rejects L-amino acids rather than detecting D-amino acids in the active site. By recycling D-aminoacyl-tRNA to D-amino acids and free tRNA molecules, this enzyme counteracts the toxicity associated with the formation of D-aminoacyl-tRNA entities in vivo and helps enforce protein L-homochirality. The chain is D-aminoacyl-tRNA deacylase from Alteromonas mediterranea (strain DSM 17117 / CIP 110805 / LMG 28347 / Deep ecotype).